We begin with the raw amino-acid sequence, 283 residues long: Protoheme IX farnesyltransferase (283 aa).

7 helical membrane passes run 13–33 (ISSV…PTGL), 35–55 (GGTL…VGTL), 90–110 (ILLV…LTAV), 156–176 (LGAG…PHFL), 208–228 (MIGF…TEAA), 230–250 (WIYG…TIVF), and 262–282 (VLKA…VDWF).

This sequence belongs to the UbiA prenyltransferase family. Protoheme IX farnesyltransferase subfamily.

The protein localises to the cell inner membrane. It catalyses the reaction heme b + (2E,6E)-farnesyl diphosphate + H2O = Fe(II)-heme o + diphosphate. It functions in the pathway porphyrin-containing compound metabolism; heme O biosynthesis; heme O from protoheme: step 1/1. Its function is as follows. Converts heme B (protoheme IX) to heme O by substitution of the vinyl group on carbon 2 of heme B porphyrin ring with a hydroxyethyl farnesyl side group. The polypeptide is Protoheme IX farnesyltransferase (Salinibacter ruber (strain DSM 13855 / M31)).